Reading from the N-terminus, the 449-residue chain is Probable phosphoglucosamine mutase (449 aa).

Residue Ser-96 is the Phosphoserine intermediate of the active site. Mg(2+) contacts are provided by Ser-96, Asp-233, Asp-235, and Asp-237. At Ser-96 the chain carries Phosphoserine.

Belongs to the phosphohexose mutase family. Mg(2+) serves as cofactor. Activated by phosphorylation.

The enzyme catalyses alpha-D-glucosamine 1-phosphate = D-glucosamine 6-phosphate. Its function is as follows. Catalyzes the conversion of glucosamine-6-phosphate to glucosamine-1-phosphate. The chain is Probable phosphoglucosamine mutase from Thermococcus gammatolerans (strain DSM 15229 / JCM 11827 / EJ3).